Reading from the N-terminus, the 582-residue chain is DNA primase (582 aa).

Residues 40 to 64 form a CHC2-type zinc finger; the sequence is CPFHHEKTPSFTVSQKKQFYHCFGC. The region spanning 259 to 341 is the Toprim domain; sequence EMLLVVEGYM…GRQLKFVFLP (83 aa). Mg(2+)-binding residues include Glu-265, Asp-309, and Asp-311.

This sequence belongs to the DnaG primase family. Monomer. Interacts with DnaB. Requires Zn(2+) as cofactor. Mg(2+) is required as a cofactor.

The catalysed reaction is ssDNA + n NTP = ssDNA/pppN(pN)n-1 hybrid + (n-1) diphosphate.. In terms of biological role, RNA polymerase that catalyzes the synthesis of short RNA molecules used as primers for DNA polymerase during DNA replication. This chain is DNA primase, found in Pasteurella multocida (strain Pm70).